Reading from the N-terminus, the 1147-residue chain is GPI inositol-deacylase (1147 aa).

Positions 1 to 94 are disordered; sequence MRRHSSGSSE…RTSPSSPLGL (94 aa). Residue Asn-23 is glycosylated (N-linked (GlcNAc...) asparagine). The segment covering 28–49 has biased composition (basic and acidic residues); that stretch reads SAKDSRSSAHPTTKLDHNRNAD. The segment covering 50–63 has biased composition (low complexity); it reads RPPSFSISRRSSSI. Residue Asn-74 is glycosylated (N-linked (GlcNAc...) asparagine). The helical transmembrane segment at 127–147 threads the bilayer; sequence AITFSALVAAIVGIGFLVAVL. Ser-310 is a catalytic residue. 2 helical membrane-spanning segments follow: residues 795 to 815 and 843 to 863; these read LYMR…ALVL and IPLM…MAPA. Asn-865 and Asn-873 each carry an N-linked (GlcNAc...) asparagine glycan. A run of 3 helical transmembrane segments spans residues 893–913, 918–938, and 965–985; these read PLFL…CTVF, LTLT…PGWI, and VLLL…VACL. Residue Asn-1011 is glycosylated (N-linked (GlcNAc...) asparagine). 3 consecutive transmembrane segments (helical) span residues 1015-1035, 1052-1072, and 1084-1104; these read SIFI…VVWV, VLSV…KMIP, and LLLF…AYTL.

It belongs to the GPI inositol-deacylase family.

The protein resides in the endoplasmic reticulum membrane. Functionally, involved in inositol deacylation of GPI-anchored proteins which plays important roles in the quality control and ER-associated degradation of GPI-anchored proteins. The polypeptide is GPI inositol-deacylase (BST1) (Chaetomium globosum (strain ATCC 6205 / CBS 148.51 / DSM 1962 / NBRC 6347 / NRRL 1970) (Soil fungus)).